A 206-amino-acid polypeptide reads, in one-letter code: MSRPRLLPEPVGLKFVTQETPPDWDAEFGFSGPLELEIGSGAGGHALEYCRRHPEVRFVAFEWRKKYARDTQDRADKAGLRNLRVIESDARFIVPRIFAPDSLAAIHLQFPDPWWKRSHAKRAVIQPAFAELLYGKLAPGGLFDMRTDVQDRGVTMLAILESVGFKNPLGSGVFHPYDPEEVPSTRERRYLASGEPVYRARLLKPA.

Residues glutamate 37, glutamate 62, aspartate 89, and aspartate 112 each contribute to the S-adenosyl-L-methionine site. Aspartate 112 is an active-site residue. Substrate is bound by residues lysine 116 and aspartate 148.

The protein belongs to the class I-like SAM-binding methyltransferase superfamily. TrmB family.

It catalyses the reaction guanosine(46) in tRNA + S-adenosyl-L-methionine = N(7)-methylguanosine(46) in tRNA + S-adenosyl-L-homocysteine. Its pathway is tRNA modification; N(7)-methylguanine-tRNA biosynthesis. In terms of biological role, catalyzes the formation of N(7)-methylguanine at position 46 (m7G46) in tRNA. This is tRNA (guanine-N(7)-)-methyltransferase from Myxococcus xanthus (strain DK1622).